Consider the following 131-residue polypeptide: Protein anoxia up-regulated (131 aa).

A compositionally biased stretch (polar residues) spans 1-24 (MVYESGFTTRRTYSSRPVTTSYAV). The disordered stretch occupies residues 1–121 (MVYESGFTTR…STTSGNLPGG (121 aa)). 2 stretches are compositionally biased toward low complexity: residues 44–53 (SSDYSYTSKS) and 98–116 (TSTT…TTSG).

Concentrated in lamina neurons, first optic lobe neurons and cortical neurons of central brain.

Its function is as follows. Plays an important role in the regulation of tissue responsiveness to oxygen deprivation. This Drosophila melanogaster (Fruit fly) protein is Protein anoxia up-regulated.